Here is a 541-residue protein sequence, read N- to C-terminus: Eukaryotic translation initiation factor 3 subunit E (541 aa).

The PCI domain maps to 252-443 (VEMFLSPVYL…GMVFMNPTHP (192 aa)). The interval 466–541 (AIDRKAHPPS…QQPAQAIAAN (76 aa)) is disordered. Residues 490–502 (NAGGRGGRGGQRN) show a composition bias toward gly residues. A compositionally biased stretch (basic and acidic residues) spans 506–522 (QRDRSHAHNNEAKREGE). Residues 523–541 (SASAEEAQQQQPAQAIAAN) are compositionally biased toward low complexity.

It belongs to the eIF-3 subunit E family. Component of the eukaryotic translation initiation factor 3 (eIF-3) complex.

It localises to the cytoplasm. Component of the eukaryotic translation initiation factor 3 (eIF-3) complex, which is involved in protein synthesis of a specialized repertoire of mRNAs and, together with other initiation factors, stimulates binding of mRNA and methionyl-tRNAi to the 40S ribosome. The eIF-3 complex specifically targets and initiates translation of a subset of mRNAs involved in cell proliferation. The protein is Eukaryotic translation initiation factor 3 subunit E of Mycosarcoma maydis (Corn smut fungus).